We begin with the raw amino-acid sequence, 445 residues long: Phosphoglucosamine mutase (445 aa).

The active-site Phosphoserine intermediate is the S102. Residues S102, D241, D243, and D245 each coordinate Mg(2+). S102 is modified (phosphoserine).

The protein belongs to the phosphohexose mutase family. The cofactor is Mg(2+). Post-translationally, activated by phosphorylation.

It carries out the reaction alpha-D-glucosamine 1-phosphate = D-glucosamine 6-phosphate. Functionally, catalyzes the conversion of glucosamine-6-phosphate to glucosamine-1-phosphate. The protein is Phosphoglucosamine mutase of Acinetobacter baumannii (strain ACICU).